The primary structure comprises 445 residues: MKLLSPLDQMFARMEAPRTPMHIGAFAVFDLPKGAPRRFIRDLYEAISQLAFLPFPFDSVIAGGASMAYWRQVQPDPSYHVRLSALPYPGTGRDLGALVERLHSTPLDMAKPLWELHLIEGLTGRQFAMYFKAHHCAVDGLGGVNLIKSWLTTDPEAPPGSGKPEPFGDDYDLASVLAAATTKRAVEGVSAVSELAGRLSSMVLGANSSVRAALTTPRTPFNTRVNRHRRLAVQVLKLPRLKAVAHATDCTVNDVILASVGGACRRYLQELGDLPTNTLTASVPVGFERDADTVNAASGFVAPLGTSIEDPVARLTTISASTTRGKAELLAMSPNALQHYSVFGLLPIAVGQKTGALGVIPPLFNFTVSNVVLSKDPLYLSGAKLDVIVPMSFLCDGYGLNVTLVGYTDKVVLGFLGCRDTLPHLQRLAQYTGAAFEELETAALP.

The active-site Proton acceptor is the histidine 135.

It belongs to the long-chain O-acyltransferase family.

It catalyses the reaction an acyl-CoA + a 1,2-diacyl-sn-glycerol = a triacyl-sn-glycerol + CoA. The catalysed reaction is di-(9Z)-octadecenoylglycerol + (9Z)-octadecenoyl-CoA = 1,2,3-tri-(9Z-octadecenoyl)-glycerol + CoA. It functions in the pathway glycerolipid metabolism; triacylglycerol biosynthesis. Catalyzes the terminal and only committed step in triacylglycerol synthesis by using diacylglycerol and fatty acyl CoA as substrates. Required for storage lipid synthesis. Its function is as follows. Upon expression in E.coli functions weakly as a triacylglycerol synthase, making triacylglycerol (TG) from diolein and long-chain fatty acyl-CoA. Has very weak wax synthase activity, incorporating palmityl alcohol into wax esters in the presence of palmitoyl-CoA. This Mycobacterium tuberculosis (strain ATCC 25618 / H37Rv) protein is Putative diacyglycerol O-acyltransferase Rv2285.